We begin with the raw amino-acid sequence, 95 residues long: Co-chaperonin GroES (95 aa).

Belongs to the GroES chaperonin family. In terms of assembly, heptamer of 7 subunits arranged in a ring. Interacts with the chaperonin GroEL.

It localises to the cytoplasm. In terms of biological role, together with the chaperonin GroEL, plays an essential role in assisting protein folding. The GroEL-GroES system forms a nano-cage that allows encapsulation of the non-native substrate proteins and provides a physical environment optimized to promote and accelerate protein folding. GroES binds to the apical surface of the GroEL ring, thereby capping the opening of the GroEL channel. The protein is Co-chaperonin GroES of Bordetella bronchiseptica (strain ATCC BAA-588 / NCTC 13252 / RB50) (Alcaligenes bronchisepticus).